We begin with the raw amino-acid sequence, 246 residues long: 5-oxoprolinase subunit A (246 aa).

It belongs to the LamB/PxpA family. Forms a complex composed of PxpA, PxpB and PxpC.

The catalysed reaction is 5-oxo-L-proline + ATP + 2 H2O = L-glutamate + ADP + phosphate + H(+). Functionally, catalyzes the cleavage of 5-oxoproline to form L-glutamate coupled to the hydrolysis of ATP to ADP and inorganic phosphate. The protein is 5-oxoprolinase subunit A of Vibrio cholerae serotype O1 (strain M66-2).